We begin with the raw amino-acid sequence, 144 residues long: Prefoldin subunit alpha (144 aa).

The protein belongs to the prefoldin subunit alpha family. As to quaternary structure, heterohexamer of two alpha and four beta subunits.

Its subcellular location is the cytoplasm. Molecular chaperone capable of stabilizing a range of proteins. Seems to fulfill an ATP-independent, HSP70-like function in archaeal de novo protein folding. This chain is Prefoldin subunit alpha, found in Methanococcus maripaludis (strain DSM 14266 / JCM 13030 / NBRC 101832 / S2 / LL).